A 185-amino-acid polypeptide reads, in one-letter code: Ribosome-recycling factor (185 aa).

It belongs to the RRF family.

It localises to the cytoplasm. Its function is as follows. Responsible for the release of ribosomes from messenger RNA at the termination of protein biosynthesis. May increase the efficiency of translation by recycling ribosomes from one round of translation to another. This chain is Ribosome-recycling factor, found in Kocuria rhizophila (strain ATCC 9341 / DSM 348 / NBRC 103217 / DC2201).